We begin with the raw amino-acid sequence, 828 residues long: DNA gyrase subunit A (828 aa).

A Topo IIA-type catalytic domain is found at 32 to 497 (LPDVRDGLKP…EVLSLEDEDL (466 aa)). Tyr120 (O-(5'-phospho-DNA)-tyrosine intermediate) is an active-site residue. Residues 524 to 530 (QKRGGRG) carry the GyrA-box motif.

It belongs to the type II topoisomerase GyrA/ParC subunit family. As to quaternary structure, heterotetramer, composed of two GyrA and two GyrB chains. In the heterotetramer, GyrA contains the active site tyrosine that forms a transient covalent intermediate with DNA, while GyrB binds cofactors and catalyzes ATP hydrolysis.

It localises to the cytoplasm. It carries out the reaction ATP-dependent breakage, passage and rejoining of double-stranded DNA.. Functionally, a type II topoisomerase that negatively supercoils closed circular double-stranded (ds) DNA in an ATP-dependent manner to modulate DNA topology and maintain chromosomes in an underwound state. Negative supercoiling favors strand separation, and DNA replication, transcription, recombination and repair, all of which involve strand separation. Also able to catalyze the interconversion of other topological isomers of dsDNA rings, including catenanes and knotted rings. Type II topoisomerases break and join 2 DNA strands simultaneously in an ATP-dependent manner. The sequence is that of DNA gyrase subunit A from Streptococcus pyogenes serotype M6 (strain ATCC BAA-946 / MGAS10394).